We begin with the raw amino-acid sequence, 444 residues long: Forkhead box protein F2 (444 aa).

Residues 32-98 are disordered; that stretch reads PAAAAAAAAA…KKASSGLRRP (67 aa). Residues 34–75 show a composition bias toward low complexity; it reads AAAAAAAAPETTSSSSSSSSASCASSSSSSNSASAPSAACKS. Gly residues predominate over residues 76–87; sequence AGGGGAGAGSGG. Residues 99 to 190 constitute a DNA-binding region (fork-head); sequence EKPPYSYIAL…EFMFEEGSFR (92 aa). Disordered stretches follow at residues 256-323 and 338-367; these read GAGA…SPAM and AHWSSPGASPYLKQPPALTPSSNPAASAGL. Basic residues predominate over residues 263–274; sequence AHPHHHHHHHVP. Positions 293 to 308 are enriched in gly residues; sequence GPGGVGAAGGGGGGDY. Over residues 309 to 323 the composition is skewed to low complexity; it reads GPDSSSSPVPSSPAM.

As to quaternary structure, interacts with the transcription factors TBP and TFIIB. Lung and placenta. Predominantly expressed in gastrointestinal tract including stomach.

It is found in the nucleus. Functionally, probable transcription activator for a number of lung-specific genes. Mediates up-regulation of the E3 ligase IRF2BPL and drives ubiquitination and degradation of CTNNB1. The chain is Forkhead box protein F2 (FOXF2) from Homo sapiens (Human).